Here is a 432-residue protein sequence, read N- to C-terminus: uncharacterized protein (432 aa).

The span at 1-14 shows a compositional bias: polar residues; that stretch reads MSDTTDVPENQKSP. A disordered region spans residues 1-42; sequence MSDTTDVPENQKSPKPSGKADKRKIEEKPENSSLKRKKFEDP. Basic and acidic residues predominate over residues 18–30; the sequence is GKADKRKIEEKPE. In terms of domain architecture, S4 RNA-binding spans 85–148; it reads RKMVEVFSGE…HEHPIRDLPI (64 aa). Aspartate 199 is a catalytic residue.

It belongs to the pseudouridine synthase RluA family.

This is an uncharacterized protein from Caenorhabditis elegans.